Reading from the N-terminus, the 444-residue chain is NADH-quinone oxidoreductase subunit F (444 aa).

61–70 lines the NAD(+) pocket; the sequence is GRGGAGFSTG. 176 to 223 contributes to the FMN binding site; it reads GAGRYICGEETALINSLEGRRANPRSKPPFPAVFGLWGKPTCVNNVET. Residues C353, C356, C359, and C400 each coordinate [4Fe-4S] cluster.

Belongs to the complex I 51 kDa subunit family. Composed of 13 different subunits. Subunits NuoCD, E, F, and G constitute the peripheral sector of the complex. FMN serves as cofactor. Requires [4Fe-4S] cluster as cofactor.

It catalyses the reaction a quinone + NADH + 5 H(+)(in) = a quinol + NAD(+) + 4 H(+)(out). Its function is as follows. NDH-1 shuttles electrons from NADH, via FMN and iron-sulfur (Fe-S) centers, to quinones in the respiratory chain. Couples the redox reaction to proton translocation (for every two electrons transferred, four hydrogen ions are translocated across the cytoplasmic membrane), and thus conserves the redox energy in a proton gradient. This Buchnera aphidicola subsp. Acyrthosiphon pisum (strain APS) (Acyrthosiphon pisum symbiotic bacterium) protein is NADH-quinone oxidoreductase subunit F (nuoF).